A 290-amino-acid polypeptide reads, in one-letter code: Cytochrome bo(3) ubiquinol oxidase subunit 2 (290 aa).

The signal sequence occupies residues 1-24; it reads MISINFNNFFKTLLLILIAFTLHG. Cysteine 25 carries N-palmitoyl cysteine lipidation. The S-diacylglycerol cysteine moiety is linked to residue cysteine 25. Residues 25-42 are Extracellular-facing; it reads CDSILFNPHGIIAIQECS. The chain crosses the membrane as a helical span at residues 43 to 63; the sequence is ILLISFLIMLFVIIPVIFMTI. Residues 64 to 87 are Cytoplasmic-facing; that stretch reads YFSVKYRASNINAKYKPDWCDSKK. A helical membrane pass occupies residues 88–108; sequence IEIIVWTIPISIILFLAFVTW. Residues 109–290 are Extracellular-facing; sequence NYSHILDPKK…TYSKNKVFKH (182 aa).

This sequence belongs to the cytochrome c oxidase subunit 2 family. Heterooctamer of two A chains, two B chains, two C chains and two D chains.

It localises to the cell membrane. Cytochrome bo(3) ubiquinol terminal oxidase is the component of the aerobic respiratory chain of E.coli that predominates when cells are grown at high aeration. Has proton pump activity across the membrane in addition to electron transfer, pumping 2 protons/electron. The protein is Cytochrome bo(3) ubiquinol oxidase subunit 2 (cyoA) of Buchnera aphidicola subsp. Schizaphis graminum (strain Sg).